Here is a 283-residue protein sequence, read N- to C-terminus: Pantoate--beta-alanine ligase (283 aa).

The protein belongs to the pantothenate synthetase family.

It carries out the reaction (R)-pantoate + beta-alanine + ATP = (R)-pantothenate + AMP + diphosphate + H(+). It participates in cofactor biosynthesis; (R)-pantothenate biosynthesis; (R)-pantothenate from (R)-pantoate and beta-alanine: step 1/1. The chain is Pantoate--beta-alanine ligase (pan6) from Schizosaccharomyces pombe (strain 972 / ATCC 24843) (Fission yeast).